The chain runs to 156 residues: Low-salt glycan biosynthesis protein Agl8 (156 aa).

Substrate contacts are provided by residues 14–15 (RI) and arginine 47. One can recognise a Nudix hydrolase domain in the interval 25–156 (ANVPLVSVDL…YVERYLDALD (132 aa)). Glycine 60, glutamate 80, and glutamine 130 together coordinate Mg(2+). The short motif at 61–82 (GTVFKNETLTDALYRVADEELG) is the Nudix box element.

Belongs to the Nudix hydrolase family. Mg(2+) is required as a cofactor.

It participates in protein modification; protein glycosylation. The protein operates within cell surface structure biogenesis; S-layer biogenesis. Its function is as follows. Nudix hydrolase involved in N-glycan biosynthetic pathway that takes place under low-salt conditions (1.75 M instead of 3.4 M). Participates in the formation of the tetrasaccharide present at 'Asn-532' of S-layer glycoprotein Csg, consisting of a sulfated hexose, 2 hexoses and rhamnose. Mediates attachment of sugar 3 in the tetrasaccharide. In Haloferax volcanii (strain ATCC 29605 / DSM 3757 / JCM 8879 / NBRC 14742 / NCIMB 2012 / VKM B-1768 / DS2) (Halobacterium volcanii), this protein is Low-salt glycan biosynthesis protein Agl8 (agl8).